The following is a 26-amino-acid chain: Hemocyanin subunit 5 (26 aa).

This sequence belongs to the tyrosinase family. Hemocyanin subfamily. As to expression, hemolymph.

It is found in the secreted. Its subcellular location is the extracellular space. Functionally, hemocyanins are copper-containing oxygen carriers occurring freely dissolved in the hemolymph of many mollusks and arthropods. In Maja squinado (Mediterranean spider crab), this protein is Hemocyanin subunit 5.